We begin with the raw amino-acid sequence, 236 residues long: RNA-binding protein 24 (236 aa).

The RRM domain occupies 11 to 88 (TKIFVGGLPY…RKANVNLAYL (78 aa)). Residues 175-199 (QYPYAASPAAAGYVTAGGYGYAVQQ) form a necessary for interaction with EIF4E region.

Interacts with EIF4E; this interaction prevents EIF4E from binding to p53/TP53 mRNA and inhibits the assembly of translation initiation complex. In terms of assembly, (Microbial infection) Interacts with HCV mature core protein; this interaction, which enhances the interaction of Core with 5'-UTR may favor viral replication over translation. As to quaternary structure, (Microbial infection) Interacts with HCV Serine protease/helicase NS3. In terms of tissue distribution, expressed in fetal and adult heart and skeletal muscles.

It localises to the nucleus. It is found in the cytoplasm. Its function is as follows. Multifunctional RNA-binding protein involved in the regulation of pre-mRNA splicing, mRNA stability and mRNA translation important for cell fate decision and differentiation. Plays a major role in pre-mRNA alternative splicing regulation. Mediates preferentially muscle-specific exon inclusion in numerous mRNAs important for striated cardiac and skeletal muscle cell differentiation. Binds to intronic splicing enhancer (ISE) composed of stretches of GU-rich motifs localized in flanking intron of exon that will be included by alternative splicing. Involved in embryonic stem cell (ESC) transition to cardiac cell differentiation by promoting pre-mRNA alternative splicing events of several pluripotency and/or differentiation genes. Plays a role in the regulation of mRNA stability. Binds to 3'-untranslated region (UTR) AU-rich elements in target transcripts, such as CDKN1A and MYOG, leading to maintain their stabilities. Involved in myogenic differentiation by regulating MYOG levels. Binds to multiple regions in the mRNA 3'-UTR of TP63 isoform 2, hence inducing its destabilization. Also promotes the destabilization of the CHRM2 mRNA via its binding to a region in the coding sequence. Plays a role in the regulation of mRNA translation. Mediates repression of p53/TP53 mRNA translation through its binding to U-rich element in the 3'-UTR, hence preventing EIF4E from binding to p53/TP53 mRNA and translation initiation. Binds to a huge amount of mRNAs. Required for embryonic heart development, sarcomer and M-band formation in striated muscles. Together with RBM20, promotes the expression of short isoforms of PDLIM5/ENH in cardiomyocytes. (Microbial infection) Promotes hepatitis C virus (HCV) replication over translation through the inhibition of viral protein expression. Decreases viral translation by linking viral 5'- and 3'-UTRs, blocking 80S ribosome assembly on the viral IRES and enhancing the interaction of the mature core protein and 5'-UTR. This is RNA-binding protein 24 from Homo sapiens (Human).